We begin with the raw amino-acid sequence, 309 residues long: CDK-activating kinase assembly factor MAT1 (309 aa).

Residues 6 to 50 (CPRCKTTKYRNPSLKLMVNVCGHTLCESCVELLFVRGSGSCQECD) form an RING-type zinc finger. The UIM domain maps to 142-161 (REQEELEEALEMEKHENEQR).

Associates with CDK7 and cyclin H.

The protein localises to the nucleus. Functionally, stabilizes the cyclin H-CDK7 complex to form a functional CDK-activating kinase (CAK) enzymatic complex. The protein is CDK-activating kinase assembly factor MAT1 (mnat1) of Xenopus laevis (African clawed frog).